Reading from the N-terminus, the 134-residue chain is Small ribosomal subunit protein uS11 (134 aa).

Over residues 113–122 the composition is skewed to polar residues; the sequence is SSITDATPQP. Residues 113-134 form a disordered region; sequence SSITDATPQPHNGCRPTKRRKV.

Belongs to the universal ribosomal protein uS11 family. Part of the 30S ribosomal subunit. Interacts with proteins S7 and S18. Binds to IF-3.

Located on the platform of the 30S subunit, it bridges several disparate RNA helices of the 16S rRNA. Forms part of the Shine-Dalgarno cleft in the 70S ribosome. This chain is Small ribosomal subunit protein uS11, found in Corynebacterium aurimucosum (strain ATCC 700975 / DSM 44827 / CIP 107346 / CN-1) (Corynebacterium nigricans).